Consider the following 387-residue polypeptide: Phosphoglycerate kinase (387 aa).

Substrate is bound by residues 21-23 (DLN), R36, 59-62 (HLGR), R113, and R146. ATP is bound by residues K197, E314, and 340 to 343 (GGDT).

The protein belongs to the phosphoglycerate kinase family. In terms of assembly, monomer.

It is found in the cytoplasm. The catalysed reaction is (2R)-3-phosphoglycerate + ATP = (2R)-3-phospho-glyceroyl phosphate + ADP. Its pathway is carbohydrate degradation; glycolysis; pyruvate from D-glyceraldehyde 3-phosphate: step 2/5. In Pseudomonas fluorescens (strain ATCC BAA-477 / NRRL B-23932 / Pf-5), this protein is Phosphoglycerate kinase.